The following is a 257-amino-acid chain: ECF RNA polymerase sigma factor SigE (257 aa).

Residues 87-153 form a sigma-70 factor domain-2 region; the sequence is LVRQHADRVY…FLDMVRRRAR (67 aa). Residues 111–114 carry the Polymerase core binding motif; that stretch reads DLTQ. The sigma-70 factor domain-4 stretch occupies residues 186–236; sequence LQAALASLPPEFRAAVVLCDIEGLSYEEIGATLGVKLGTVRSRIHRGRQAL. The H-T-H motif DNA-binding region spans 211 to 230; it reads YEEIGATLGVKLGTVRSRIH.

Belongs to the sigma-70 factor family. ECF subfamily. Interacts transiently with the RNA polymerase catalytic core formed by RpoA, RpoB, RpoC and RpoZ (2 alpha, 1 beta, 1 beta' and 1 omega subunit) to form the RNA polymerase holoenzyme that can initiate transcription. Interacts (via sigma-70 factor domain 4) with cognate anti-sigma-E factor RseA under reducing conditions, which stops the sigma factor from functioning.

Its function is as follows. Sigma factors are initiation factors that promote the attachment of RNA polymerase to specific initiation sites and are then released. Extracytoplasmic function (ECF) sigma factors are held in an inactive form by an anti-sigma factor until released. Responds to surface stress (H(2)O(2)). This Mycobacterium tuberculosis (strain ATCC 35801 / TMC 107 / Erdman) protein is ECF RNA polymerase sigma factor SigE (sigE).